The sequence spans 620 residues: 1-deoxy-D-xylulose-5-phosphate synthase (620 aa).

Residues histidine 80 and 121–123 each bind thiamine diphosphate; that span reads GHS. Aspartate 152 provides a ligand contact to Mg(2+). Residues 153 to 154, asparagine 181, tyrosine 288, and glutamate 370 each bind thiamine diphosphate; that span reads GA. Mg(2+) is bound at residue asparagine 181.

This sequence belongs to the transketolase family. DXPS subfamily. As to quaternary structure, homodimer. It depends on Mg(2+) as a cofactor. The cofactor is thiamine diphosphate.

It carries out the reaction D-glyceraldehyde 3-phosphate + pyruvate + H(+) = 1-deoxy-D-xylulose 5-phosphate + CO2. It participates in metabolic intermediate biosynthesis; 1-deoxy-D-xylulose 5-phosphate biosynthesis; 1-deoxy-D-xylulose 5-phosphate from D-glyceraldehyde 3-phosphate and pyruvate: step 1/1. Its function is as follows. Catalyzes the acyloin condensation reaction between C atoms 2 and 3 of pyruvate and glyceraldehyde 3-phosphate to yield 1-deoxy-D-xylulose-5-phosphate (DXP). The sequence is that of 1-deoxy-D-xylulose-5-phosphate synthase from Escherichia coli O139:H28 (strain E24377A / ETEC).